The sequence spans 210 residues: MRTNIVIPMKDPQLSKTRLDPQLSSRQRQALALSMFKTTLSFFNKYFPQHHLLVVTASEFISDIACTYGASVLIETKLGLRQAVESAARWSLNNDFQSQLLIPADIAELDYREFERLLMIYRPVPSVLLCPAFDLGTNALLTTPPNAIPFLYGIDSSLAHQRVAQERDIVCQVIKLPALALDIDTPDDLELLALLSSPVTQELNKLCKTA.

This sequence belongs to the CofC family.

The enzyme catalyses (2R)-3-phosphoglycerate + GTP + H(+) = 3-[(R)-glyceryl]-diphospho-5'-guanosine + diphosphate. It functions in the pathway cofactor biosynthesis; coenzyme F420 biosynthesis. Its function is as follows. Guanylyltransferase that catalyzes the activation of (2R)-3-phosphoglycerate (3PG) as 3-[(R)-glyceryl]-diphospho-5'-guanosine, via the condensation of 3PG with GTP. It is involved in the biosynthesis of a derivative of the hydride carrier cofactor coenzyme F420, 3PG-F420. This chain is 3-phospho-D-glycerate guanylyltransferase, found in Colwellia psychrerythraea (strain 34H / ATCC BAA-681) (Vibrio psychroerythus).